The primary structure comprises 920 residues: Isoleucine--tRNA ligase (920 aa).

Residues 57–67 carry the 'HIGH' region motif; sequence PYANGDIHLGH. L-isoleucyl-5'-AMP is bound at residue Glu560. Residues 601–605 carry the 'KMSKS' region motif; sequence KMSKS. Lys604 contacts ATP. Residues Cys890, Cys893, Cys910, and Cys913 each coordinate Zn(2+).

The protein belongs to the class-I aminoacyl-tRNA synthetase family. IleS type 1 subfamily. Monomer. The cofactor is Zn(2+).

Its subcellular location is the cytoplasm. It catalyses the reaction tRNA(Ile) + L-isoleucine + ATP = L-isoleucyl-tRNA(Ile) + AMP + diphosphate. Functionally, catalyzes the attachment of isoleucine to tRNA(Ile). As IleRS can inadvertently accommodate and process structurally similar amino acids such as valine, to avoid such errors it has two additional distinct tRNA(Ile)-dependent editing activities. One activity is designated as 'pretransfer' editing and involves the hydrolysis of activated Val-AMP. The other activity is designated 'posttransfer' editing and involves deacylation of mischarged Val-tRNA(Ile). This is Isoleucine--tRNA ligase from Caldicellulosiruptor saccharolyticus (strain ATCC 43494 / DSM 8903 / Tp8T 6331).